The following is a 968-amino-acid chain: MPFTLGQRWISDTENELGLGTVVAQDARMVTLLFSTSGENRLYARTDAPITRVMFNPGDTVTSHEGWQLLIDTIEEKEGLLTYIGTRLDNGETGCTLREVLLDSKLTFSKPQDRLFAGQIDRMDRFALRYRARKFYSEQFRAPWNGLRGIRASLIPHQLHIASEVGQRHAPRVLLADEVGLGKTIEAGMIIHQQMLTGRAERVLIVVPESLLHQWLVEMLRRFNLHFSLFDDERYSQSLLDSDNPFETEQLVLCSLDFVRRNKERLTHLTEAEWDILVVDEAHHLAWSETAPSREYQVIERLAHHIPGVLLLTATPEQLGMQSHFARLRLLDPNRFHDYQAFADEQQRYRLVADTVGLLLNNELLDAAAMTLLAEMLGGQNADALLARVNEQNAADDDARRRLTAMLMDSHGTSRVMFRNTRQGVKGFPARRLHACALPLPAQYQTAFKVAGIMGGKQRLDESARHMLYPEQIFQQFEGQNATWWNFDPRVQWLVDFLLDLRQEKVLVICAHAGTALQLEQVLREREGIRAAVFHEGLSLVDRDRAAAYFASAEDGAQVLLCSEIGSEGRNFQFASQMVMFDLPFNPDLLEQRIGRLDRIGQNRDIQIHVPYLEQSAQAVLLRWYHEGLDAFEHTCPTGRALYDETYQTLQGYLAEPGALTGLTAFIHDCRARHDALKAQMEQGRDRLLELHSNGGEPARVLAQTLAEQDNDSQLVNFALNLFDIIGISQEDRSDNLLVLKPSDHMLVPDFPDVSEEGCTITFNRDQALAREETQFISWEHPIIRNGLDLVLSSESGNSALSLLKNKALPVGTLLLELIYVVESQAPRNLQLNRFLPATPLRLLLDKNGTNLAPQVEFEQFNRQLNAVKRHTASKLVSAVQPEVHGMLTHGEHLVAEQAQALIDEARAQADLLLSAELSRLKALRAVNPAIRDNELEAVAENRRQVLRHLDEASWRLDAIRLIVVTHQ.

The Helicase ATP-binding domain maps to 164 to 334 (EVGQRHAPRV…FARLRLLDPN (171 aa)). 177-184 (DEVGLGKT) contributes to the ATP binding site. A DEAH box motif is present at residues 280 to 283 (DEAH). One can recognise a Helicase C-terminal domain in the interval 493–644 (WLVDFLLDLR…TCPTGRALYD (152 aa)).

Belongs to the SNF2/RAD54 helicase family. RapA subfamily. Interacts with the RNAP. Has a higher affinity for the core RNAP than for the holoenzyme. Its ATPase activity is stimulated by binding to RNAP.

Its function is as follows. Transcription regulator that activates transcription by stimulating RNA polymerase (RNAP) recycling in case of stress conditions such as supercoiled DNA or high salt concentrations. Probably acts by releasing the RNAP, when it is trapped or immobilized on tightly supercoiled DNA. Does not activate transcription on linear DNA. Probably not involved in DNA repair. In Sodalis glossinidius (strain morsitans), this protein is RNA polymerase-associated protein RapA.